The following is a 196-amino-acid chain: Leucyl/phenylalanyl-tRNA--protein transferase (196 aa).

The protein belongs to the L/F-transferase family.

The protein resides in the cytoplasm. It carries out the reaction N-terminal L-lysyl-[protein] + L-leucyl-tRNA(Leu) = N-terminal L-leucyl-L-lysyl-[protein] + tRNA(Leu) + H(+). The enzyme catalyses N-terminal L-arginyl-[protein] + L-leucyl-tRNA(Leu) = N-terminal L-leucyl-L-arginyl-[protein] + tRNA(Leu) + H(+). The catalysed reaction is L-phenylalanyl-tRNA(Phe) + an N-terminal L-alpha-aminoacyl-[protein] = an N-terminal L-phenylalanyl-L-alpha-aminoacyl-[protein] + tRNA(Phe). In terms of biological role, functions in the N-end rule pathway of protein degradation where it conjugates Leu, Phe and, less efficiently, Met from aminoacyl-tRNAs to the N-termini of proteins containing an N-terminal arginine or lysine. The chain is Leucyl/phenylalanyl-tRNA--protein transferase from Thermosynechococcus vestitus (strain NIES-2133 / IAM M-273 / BP-1).